The chain runs to 393 residues: Short-chain dehydrogenase/reductase family 42E member 1 (393 aa).

The active-site Proton acceptor is tyrosine 152. Lysine 156 is a binding site for NAD(+). Helical transmembrane passes span 282 to 302 and 371 to 391; these read LPLT…FILG and GLVI…SVIL.

This sequence belongs to the 3-beta-HSD family.

Its subcellular location is the membrane. This is Short-chain dehydrogenase/reductase family 42E member 1 (SDR42E1) from Bos taurus (Bovine).